Reading from the N-terminus, the 1249-residue chain is Myosin-1 (1249 aa).

The interval 1–42 (MGHSRRPAGGEKKSRGFGRSKAVADVGDGRQTGGKPQVKKAT) is disordered. A Myosin motor domain is found at 51–730 (IGVSDLTLLS…TLFALEAMRD (680 aa)). 144-151 (GESGAGKT) lines the ATP pocket. Ser-372 is subject to Phosphoserine. Positions 419–501 (SIGILDIYGF…PGVFAALNDA (83 aa)) are actin-binding. IQ domains lie at 734-754 (HNMA…RTEC) and 755-780 (AIRI…QGHQ). Residues 788–978 (RRRMSLLGSR…TIHTGPGEPA (191 aa)) form the TH1 domain. Disordered stretches follow at residues 962–1079 (DDSY…PKKP) and 1126–1249 (WTPE…DDDW). Residues 1021–1035 (AAQPLPRATPQPAEP) show a composition bias toward pro residues. Positions 1036–1051 (QPAARAVPQPVAAVAA) are enriched in low complexity. Pro residues-rich tracts occupy residues 1064 to 1077 (APPP…PAPK) and 1139 to 1150 (TPKPAPPPPPAA). The SH3 domain maps to 1076–1137 (PKKPTAKVLY…PEAYLEEQVA (62 aa)). Residues 1151–1169 (PRSTPAPATNGAAAAAKAK) are compositionally biased toward low complexity. Polar residues predominate over residues 1200–1221 (VSMNSHDSSGGSGRGTPNSMSN). A compositionally biased stretch (low complexity) spans 1222 to 1231 (ASLAGGLAEA).

Belongs to the TRAFAC class myosin-kinesin ATPase superfamily. Myosin family. Phosphorylation of the TEDS site (Ser-372) is required for the polarization of the actin cytoskeleton. Phosphorylation probably activates the myosin-I ATPase activity.

It is found in the cytoplasm. The protein resides in the cytoskeleton. The protein localises to the actin patch. Its function is as follows. Type-I myosin implicated in the organization of the actin cytoskeleton. Required for proper actin cytoskeleton polarization. At the cell cortex, assembles in patch-like structures together with proteins from the actin-polymerizing machinery and promotes actin assembly. Functions as actin nucleation-promoting factor (NPF) for the Arp2/3 complex. Plays an important role in polarized growth, spore germination, hyphal morphogenesis, and septal wall formation. In Aspergillus fumigatus (strain ATCC MYA-4609 / CBS 101355 / FGSC A1100 / Af293) (Neosartorya fumigata), this protein is Myosin-1 (myoA).